Consider the following 952-residue polypeptide: Calsyntenin-1 (952 aa).

An N-terminal signal peptide occupies residues 1 to 28 (MLRRPAPALARAVRLLLAGLLYGGGVWA). Over 29-830 (ARVNKHKPWL…PHPFAVVPST (802 aa)) the chain is Extracellular. Cadherin domains lie at 38–154 (LEPT…APVF) and 155–255 (KEKS…SPGW). Asn356 carries an N-linked (GlcNAc...) asparagine glycan. Residues 831–851 (ATVVIVVCVSFLVFMIILGVF) traverse the membrane as a helical segment. The Cytoplasmic portion of the chain corresponds to 852–952 (RIRAAHQRTM…LEWDYSTLSY (101 aa)). The tract at residues 886–952 (METYEDQHSS…LEWDYSTLSY (67 aa)) is disordered. The segment covering 896-930 (EEEEEEEEEEESEDGEEEEDITSAESESSEEEEGG) has biased composition (acidic residues). Polar residues predominate over residues 934 to 952 (GQNTTRQQQLEWDYSTLSY).

It belongs to the calsyntenin family. As to quaternary structure, directly interacts with APBA2. Forms a tripartite complex with APBA2 and APP. Interacts with KLC1. Interacts with APBB1; this interaction stabilizes AlcICD metabolism. In terms of assembly, interacts with PSEN1. In terms of processing, proteolytically processed under normal cellular conditions. A primary zeta-cleavage generates a large extracellular (soluble) N-terminal domain (sAlc) and a short C-terminal transmembrane fragment (CTF1). A secondary cleavage catalyzed by presenilin gamma-secretase within the transmembrane domain releases the beta-Alc-alpha chain in the extracellular milieu and produces an intracellular fragment (AlcICD). This processing is strongly suppressed in the tripartite complex formed with APBA2 and APP, which seems to prevent the association with PSEN1. In terms of tissue distribution, preferentially expressed in the retina and brain.

The protein localises to the postsynaptic cell membrane. The protein resides in the endoplasmic reticulum membrane. Its subcellular location is the golgi apparatus membrane. It is found in the cell projection. It localises to the neuron projection. The protein localises to the nucleus. Its function is as follows. Postsynaptic adhesion molecule that binds to presynaptic neurexins to mediate both excitatory and inhibitory synapse formation. Promotes synapse development by acting as a cell adhesion molecule at the postsynaptic membrane, which associates with neurexin-alpha at the presynaptic membrane. Also functions as a cargo in axonal anterograde transport by acting as a molecular adapter that promotes KLC1 association with vesicles. Complex formation with APBA2 and APP, stabilizes APP metabolism and enhances APBA2-mediated suppression of beta-APP40 secretion, due to the retardation of intracellular APP maturation. Functionally, as intracellular fragment AlcICD, suppresses APBB1-dependent transactivation stimulated by APP C-terminal intracellular fragment (AICD), most probably by competing with AICD for APBB1-binding. In terms of biological role, in complex with APBA2 and C99, a C-terminal APP fragment, abolishes C99 interaction with PSEN1 and thus APP C99 cleavage by gamma-secretase, most probably through stabilization of the direct interaction between APBA2 and APP. The polypeptide is Calsyntenin-1 (Clstn1) (Rattus norvegicus (Rat)).